The following is a 75-amino-acid chain: Supwaprin-a (75 aa).

Positions 1–24 (MSSGGLLLLLGFLTLWAELTPVSG) are cleaved as a signal peptide. In terms of domain architecture, WAP spans 27–72 (RPKKPGLCPPRPQKPPCVRECKNDWSCPGEQKCCRYGCIFECRDPI). Cystine bridges form between Cys-34–Cys-60, Cys-43–Cys-64, Cys-47–Cys-59, and Cys-53–Cys-68.

The protein belongs to the venom waprin family. In terms of tissue distribution, expressed by the venom gland.

The protein localises to the secreted. Functionally, damages membranes of susceptible bacteria. Has no hemolytic activity. Not toxic to mice. Does not inhibit the proteinases elastase and cathepsin G. The sequence is that of Supwaprin-a from Austrelaps superbus (Lowland copperhead snake).